The sequence spans 67 residues: Protein AaeX (67 aa).

Transmembrane regions (helical) follow at residues F10–V30 and F43–F63.

This sequence belongs to the AaeX family.

Its subcellular location is the cell membrane. The protein is Protein AaeX of Pectobacterium atrosepticum (strain SCRI 1043 / ATCC BAA-672) (Erwinia carotovora subsp. atroseptica).